Here is a 1356-residue protein sequence, read N- to C-terminus: Kinesin-like protein KIF24 (1356 aa).

In terms of domain architecture, SAM spans 1-64 (MASWLYECLC…FQLIKIIKIM (64 aa)). The tract at residues 93–119 (GPRRQLHFDSPSASKDKMANNETGSLS) is disordered. At S102 the chain carries Phosphoserine. The 324-residue stretch at 218–541 (KIRVCVRKRP…LRYADRVKEL (324 aa)) folds into the Kinesin motor domain. Position 308 to 315 (308 to 315 (GQTGAGKT)) interacts with ATP. Residue S473 is modified to Phosphoserine. Residues 473–702 (SLLALKECIR…PTRGKKVQPV (230 aa)) form an interaction with MPHOSPH9 region. Over residues 552–571 (TSQNQTSANASPKRIQSSPV) the composition is skewed to polar residues. 5 disordered regions span residues 552–581 (TSQN…CSPK), 597–664 (PTKV…LCSE), 788–840 (EGRL…STAL), 897–947 (RGAL…HQKP), and 964–998 (VPEQ…DQRD). S579 carries the phosphoserine modification. Residue T615 is modified to Phosphothreonine; by NEK2. S616 is modified (phosphoserine; by NEK2). A phosphoserine mark is found at S640, S817, and S820. Basic residues predominate over residues 640-653 (SPRKGTTRSGHSIK). Residues 810–821 (QAEDLDDSDFSE) show a composition bias toward acidic residues. Residues 830–840 (QPAMKQGSTAL) are compositionally biased toward polar residues. A compositionally biased stretch (polar residues) spans 970–979 (GSLSSPSPEN). S1008 bears the Phosphoserine mark. The interval 1109 to 1140 (LSSSPPDNRPSGDLPALSPSPIHQHSPDKLPG) is disordered.

Belongs to the TRAFAC class myosin-kinesin ATPase superfamily. Kinesin family. As to quaternary structure, interacts with CCP110, CEP97, TALPID3. Interacts with MPHOSPH9. As to expression, expressed in brain, spinal cord, and small intestine.

It localises to the cytoplasm. The protein localises to the cytoskeleton. Its subcellular location is the microtubule organizing center. The protein resides in the centrosome. It is found in the centriole. Microtubule-dependent motor protein that acts as a negative regulator of ciliogenesis by mediating recruitment of CCP110 to mother centriole in cycling cells, leading to restrict nucleation of cilia at centrioles. Mediates depolymerization of microtubules of centriolar origin, possibly to suppress aberrant cilia formation. Following activation by NEK2 involved in disassembly of primary cilium during G2/M phase but does not disassemble fully formed ciliary axonemes. As cilium assembly and disassembly is proposed to coexist in a dynamic equilibrium may suppress nascent cilium assembly and, potentially, ciliar re-assembly in cells that have already disassembled their cilia ensuring the completion of cilium removal in the later stages of the cell cycle. Plays an important role in recruiting MPHOSPH9, a negative regulator of cilia formation to the distal end of mother centriole. The protein is Kinesin-like protein KIF24 (Kif24) of Mus musculus (Mouse).